Here is a 294-residue protein sequence, read N- to C-terminus: 33 kDa chaperonin (294 aa).

Disulfide bonds link C237-C239 and C270-C273.

This sequence belongs to the HSP33 family. Post-translationally, under oxidizing conditions two disulfide bonds are formed involving the reactive cysteines. Under reducing conditions zinc is bound to the reactive cysteines and the protein is inactive.

The protein localises to the cytoplasm. Functionally, redox regulated molecular chaperone. Protects both thermally unfolding and oxidatively damaged proteins from irreversible aggregation. Plays an important role in the bacterial defense system toward oxidative stress. This Geobacillus kaustophilus (strain HTA426) protein is 33 kDa chaperonin.